The sequence spans 152 residues: SsrA-binding protein (152 aa).

The interval 124 to 152 is disordered; sequence KKLHDKRDTAAERDWQRDKARLMKGDRGD. Basic and acidic residues predominate over residues 128–152; sequence DKRDTAAERDWQRDKARLMKGDRGD.

Belongs to the SmpB family.

The protein resides in the cytoplasm. Its function is as follows. Required for rescue of stalled ribosomes mediated by trans-translation. Binds to transfer-messenger RNA (tmRNA), required for stable association of tmRNA with ribosomes. tmRNA and SmpB together mimic tRNA shape, replacing the anticodon stem-loop with SmpB. tmRNA is encoded by the ssrA gene; the 2 termini fold to resemble tRNA(Ala) and it encodes a 'tag peptide', a short internal open reading frame. During trans-translation Ala-aminoacylated tmRNA acts like a tRNA, entering the A-site of stalled ribosomes, displacing the stalled mRNA. The ribosome then switches to translate the ORF on the tmRNA; the nascent peptide is terminated with the 'tag peptide' encoded by the tmRNA and targeted for degradation. The ribosome is freed to recommence translation, which seems to be the essential function of trans-translation. This Caulobacter vibrioides (strain ATCC 19089 / CIP 103742 / CB 15) (Caulobacter crescentus) protein is SsrA-binding protein.